The primary structure comprises 247 residues: Adenosylcobinamide-GDP ribazoletransferase (247 aa).

A run of 5 helical transmembrane segments spans residues 34–54 (IITF…VFMA), 59–79 (FGVP…TGGF), 113–133 (GGLA…ELAL), 138–158 (ILAS…LLMY), and 194–214 (VLLP…AIFI).

It belongs to the CobS family. Requires Mg(2+) as cofactor.

It is found in the cell inner membrane. The catalysed reaction is alpha-ribazole + adenosylcob(III)inamide-GDP = adenosylcob(III)alamin + GMP + H(+). It catalyses the reaction alpha-ribazole 5'-phosphate + adenosylcob(III)inamide-GDP = adenosylcob(III)alamin 5'-phosphate + GMP + H(+). Its pathway is cofactor biosynthesis; adenosylcobalamin biosynthesis; adenosylcobalamin from cob(II)yrinate a,c-diamide: step 7/7. Joins adenosylcobinamide-GDP and alpha-ribazole to generate adenosylcobalamin (Ado-cobalamin). Also synthesizes adenosylcobalamin 5'-phosphate from adenosylcobinamide-GDP and alpha-ribazole 5'-phosphate. This chain is Adenosylcobinamide-GDP ribazoletransferase, found in Escherichia coli O17:K52:H18 (strain UMN026 / ExPEC).